A 306-amino-acid chain; its full sequence is Ribonuclease Z (306 aa).

Zn(2+)-binding residues include His63, His65, Asp67, His68, His142, Asp213, and His271. The active-site Proton acceptor is Asp67.

The protein belongs to the RNase Z family. In terms of assembly, homodimer. The cofactor is Zn(2+).

It catalyses the reaction Endonucleolytic cleavage of RNA, removing extra 3' nucleotides from tRNA precursor, generating 3' termini of tRNAs. A 3'-hydroxy group is left at the tRNA terminus and a 5'-phosphoryl group is left at the trailer molecule.. Functionally, zinc phosphodiesterase, which displays some tRNA 3'-processing endonuclease activity. Probably involved in tRNA maturation, by removing a 3'-trailer from precursor tRNA. This chain is Ribonuclease Z, found in Oceanobacillus iheyensis (strain DSM 14371 / CIP 107618 / JCM 11309 / KCTC 3954 / HTE831).